The following is a 159-amino-acid chain: Aspartate carbamoyltransferase regulatory chain (159 aa).

Positions 113, 118, 143, and 146 each coordinate Zn(2+).

The protein belongs to the PyrI family. As to quaternary structure, contains catalytic and regulatory chains. Requires Zn(2+) as cofactor.

Its function is as follows. Involved in allosteric regulation of aspartate carbamoyltransferase. This Methanococcoides burtonii (strain DSM 6242 / NBRC 107633 / OCM 468 / ACE-M) protein is Aspartate carbamoyltransferase regulatory chain.